The following is a 741-amino-acid chain: HSP-interacting protein (741 aa).

TPR repeat units follow at residues 26-59 (SREL…LPAG), 65-100 (AHLR…VPRY), and 102-134 (RALL…EPGN). Residues 168–270 (ASAKGEERKK…GESKQQKHSA (103 aa)) form a disordered region. A compositionally biased stretch (basic and acidic residues) spans 171 to 184 (KGEERKKSRNKRFD). Residues 201 to 218 (SASTEKQAGPRQTNGTGN) show a composition bias toward polar residues. Residues 219–247 (HQDHTEDSESNGLEKLEQSTETGEKDMGK) are compositionally biased toward basic and acidic residues. The segment covering 248 to 258 (KRGAHAAGKKP) has biased composition (basic residues). One can recognise a PB1 domain in the interval 285 to 364 (MKDVKLVFGE…VPIRFYVVEV (80 aa)). TPR repeat units follow at residues 496-530 (EFIL…KSDF), 532-557 (EGLI…ACKI), 558-591 (NMET…RLKG), and 628-663 (SHIN…AMEK).

In terms of assembly, interacts (via C-terminus) with O1. Interacts (via C-terminus) with OP10 (via N-terminus).

Acts as a co-chaperone for HSP90 and is required for proper folding of the myosin motor domain. The protein is HSP-interacting protein of Zea mays (Maize).